The sequence spans 733 residues: Forkhead box protein K1 (733 aa).

Position 2 is an N-acetylalanine (A2). The interaction with SIN3A and SIN3B stretch occupies residues 2–40 (AEVGEDSGARALLALRSAPCSPVLCAAAAAAAFPAAAPP). The interval 36 to 79 (AAAPPPAPAQPQPPPGPPPPPPPPLPPGAIAGAGSSGGSSGVSG) is disordered. The span at 37 to 62 (AAPPPAPAQPQPPPGPPPPPPPPLPP) shows a compositional bias: pro residues. The interval 95–420 (AASVRQSPGP…PLSSRSAPAS (326 aa)) is required for interaction with FOXO4 and MEF2C. Phosphoserine is present on S101. The 53-residue stretch at 123-175 (VTIGRNSSQGSVDLSMGLSSFISRRHLQLSFQEPHFYLRCLGKNGVFVDGAFQ) folds into the FHA domain. Omega-N-methylarginine is present on residues R161 and R191. 4 positions are modified to phosphoserine: S213, S223, S239, and S243. A phosphothreonine mark is found at T245 and T247. 4 positions are modified to phosphoserine: S253, S257, S295, and S299. 2 disordered regions span residues 287 to 306 (ASEQQADTSGGDSPKDESKP) and 413 to 436 (SSRSAPASPTHPGLMSPRSGGLQT). Residues 305 to 400 (KPPFSYAQLI…EQAFRKRRQR (96 aa)) constitute a DNA-binding region (fork-head). Phosphoserine is present on residues S416 and S420. At T422 the chain carries Phosphothreonine. S428 bears the Phosphoserine mark. Position 436 is a phosphothreonine (T436). S441, S445, and S459 each carry phosphoserine. Over residues 676-697 (VAATATTTPATATTASASASST) the composition is skewed to low complexity. A disordered region spans residues 676 to 733 (VAATATTTPATATTASASASSTGEPEVKRSRVEEPSGAVTTPAGVIAAAGPQGPGTGE). The span at 700–709 (PEVKRSRVEE) shows a compositional bias: basic and acidic residues.

As to quaternary structure, interacts with SIN3A and SIN3B (via PAH2) to form a complex which represses transcription. Component of SIN3A-, but not SIN3B-, containing multiprotein complexes. Interacts with FOXO4 and MEF2C; both interactions inhibit FOXO4 and MEF2C transactivation activity. Interacts (when phosphorylated) with YWHAE/14-3-3-epsilon; promotes sequestration in the cytoplasm and leads to impaired ability to bind DNA. Interacts with FHL2. Interacts with SRF. Interacts with DVL2 and DVL3; the interaction induces DVL2 nuclear translocation. Interacts with BAP1 (when phosphorylated). Accessory component of the polycomb repressive deubiquitinase (PR-DUB) complex, at least composed of BAP1, one of ASXL1, ASXL2 or (probably) ASXL3 and one of MBD5 or MBD6. The PR-DUB core associates with a number of accessory proteins, including FOXK1, FOXK2, KDM1B, HCFC1 and OGT. In terms of processing, phosphorylation by GSK3 (GSK3A or GSK3B) promotes interaction with YWHAE/14-3-3-epsilon and retention in the cytoplasm. In response to mTORC1 signaling, phosphorylation by GSK3 is prevented, leading to translocation to the nucleus. Expressed both developing and adult tissues. In adults, significant expression is seen in tumors of the brain, colon and lymph node.

The protein localises to the nucleus. It is found in the cytoplasm. Its function is as follows. Transcriptional regulator involved in different processes such as glucose metabolism, aerobic glycolysis, muscle cell differentiation and autophagy. Recognizes and binds the forkhead DNA sequence motif (5'-GTAAACA-3') and can both act as a transcription activator or repressor, depending on the context. Together with FOXK2, acts as a key regulator of metabolic reprogramming towards aerobic glycolysis, a process in which glucose is converted to lactate in the presence of oxygen. Acts by promoting expression of enzymes for glycolysis (such as hexokinase-2 (HK2), phosphofructokinase, pyruvate kinase (PKLR) and lactate dehydrogenase), while suppressing further oxidation of pyruvate in the mitochondria by up-regulating pyruvate dehydrogenase kinases PDK1 and PDK4. Probably plays a role in gluconeogenesis during overnight fasting, when lactate from white adipose tissue and muscle is the main substrate. Involved in mTORC1-mediated metabolic reprogramming: in response to mTORC1 signaling, translocates into the nucleus and regulates the expression of genes associated with glycolysis and downstream anabolic pathways, such as HIF1A, thereby regulating glucose metabolism. Together with FOXK2, acts as a negative regulator of autophagy in skeletal muscle: in response to starvation, enters the nucleus, binds the promoters of autophagy genes and represses their expression, preventing proteolysis of skeletal muscle proteins. Acts as a transcriptional regulator of the myogenic progenitor cell population in skeletal muscle. Binds to the upstream enhancer region (CCAC box) of myoglobin (MB) gene, regulating the myogenic progenitor cell population. Promotes muscle progenitor cell proliferation by repressing the transcriptional activity of FOXO4, thereby inhibiting myogenic differentiation. Involved in remodeling processes of adult muscles that occur in response to physiological stimuli. Required to correct temporal orchestration of molecular and cellular events necessary for muscle repair. Represses myogenic differentiation by inhibiting MEFC activity. Positively regulates Wnt/beta-catenin signaling by translocating DVL into the nucleus. Reduces virus replication, probably by binding the interferon stimulated response element (ISRE) to promote antiviral gene expression. Accessory component of the polycomb repressive deubiquitinase (PR-DUB) complex; recruits the PR-DUB complex to specific FOXK1-bound genes. In Homo sapiens (Human), this protein is Forkhead box protein K1.